Consider the following 178-residue polypeptide: Probable chorismate pyruvate-lyase (178 aa).

Residues Met-37, Arg-78, Leu-114, and Glu-165 each coordinate substrate.

This sequence belongs to the UbiC family.

The protein resides in the cytoplasm. It carries out the reaction chorismate = 4-hydroxybenzoate + pyruvate. It functions in the pathway cofactor biosynthesis; ubiquinone biosynthesis. In terms of biological role, removes the pyruvyl group from chorismate, with concomitant aromatization of the ring, to provide 4-hydroxybenzoate (4HB) for the ubiquinone pathway. In Aeromonas hydrophila subsp. hydrophila (strain ATCC 7966 / DSM 30187 / BCRC 13018 / CCUG 14551 / JCM 1027 / KCTC 2358 / NCIMB 9240 / NCTC 8049), this protein is Probable chorismate pyruvate-lyase.